The chain runs to 119 residues: Ig heavy chain V region X44 (119 aa).

One can recognise an Ig-like domain in the interval Glu1–Ser117.

This chain is Ig heavy chain V region X44, found in Mus musculus (Mouse).